The primary structure comprises 384 residues: Transcriptional regulator of the unfolded protein response hacA (384 aa).

Residues 1–18 (MTESTFAVETFSMDSMSP) show a composition bias toward polar residues. Disordered stretches follow at residues 1–27 (MTESTFAVETFSMDSMSPSPGAEIPRL) and 41–94 (LVPE…QRRI). Positions 84-94 (KTEDEKEQRRI) are enriched in basic and acidic residues. Positions 90 to 153 (EQRRIERVLR…NRLSQQVAKL (64 aa)) constitute a bZIP domain. The segment at 92–101 (RRIERVLRNR) is basic motif. Residues 106 to 113 (ISRERKRL) form a leucine-zipper region. 2 disordered regions span residues 208-256 (SIPF…PSDL) and 331-384 (PDED…AGAQ). Residues 218-240 (STTTTTTTTTTTSNNISSTSSTT) are compositionally biased toward low complexity.

This sequence belongs to the bZIP family.

It localises to the nucleus. In terms of biological role, master transcriptional regulator of the unfolded protein response (UPR) that recognizes and binds to the UPR element (UPRE) in the promoter of UPR-regulated genes. Exposure to antifungals and ER-stressing agents initiates the activation of hacA which occurs when a 20 nucleotide fragment is removed from part of the exon-2 and part of intron-2, which in turn promotes the arisen of the DNA binding site motif and a dimer interface domain. Modulates the expression of genes related to cell wall synthesis, ergosterol biosynthesis, pigmentation, heat shock proteins, and the genes coding for mannosyltransferase enzymes. Plays a key role in both response to stress and host-pathogen interaction. The protein is Transcriptional regulator of the unfolded protein response hacA of Trichophyton rubrum (strain ATCC MYA-4607 / CBS 118892) (Athlete's foot fungus).